The primary structure comprises 390 residues: S-adenosylmethionine synthase 2 (390 aa).

E9 serves as a coordination point for Mg(2+). H15 is a binding site for ATP. Residue E43 coordinates K(+). E56 and Q99 together coordinate L-methionine. Residues 167-169, 235-238, D246, 252-253, A269, K273, and K277 each bind ATP; these read DGK, SGRF, and RK. D246 lines the L-methionine pocket. Position 277 (K277) interacts with L-methionine.

Belongs to the AdoMet synthase family. Homotetramer. It depends on Mn(2+) as a cofactor. Mg(2+) is required as a cofactor. Co(2+) serves as cofactor. The cofactor is K(+).

The protein resides in the cytoplasm. It carries out the reaction L-methionine + ATP + H2O = S-adenosyl-L-methionine + phosphate + diphosphate. It functions in the pathway amino-acid biosynthesis; S-adenosyl-L-methionine biosynthesis; S-adenosyl-L-methionine from L-methionine: step 1/1. Its function is as follows. Catalyzes the formation of S-adenosylmethionine from methionine and ATP. The reaction comprises two steps that are both catalyzed by the same enzyme: formation of S-adenosylmethionine (AdoMet) and triphosphate, and subsequent hydrolysis of the triphosphate. This Petunia hybrida (Petunia) protein is S-adenosylmethionine synthase 2 (SAM2).